The primary structure comprises 117 residues: Ribosome-binding factor A (117 aa).

This sequence belongs to the RbfA family. In terms of assembly, monomer. Binds 30S ribosomal subunits, but not 50S ribosomal subunits or 70S ribosomes.

It localises to the cytoplasm. Functionally, one of several proteins that assist in the late maturation steps of the functional core of the 30S ribosomal subunit. Associates with free 30S ribosomal subunits (but not with 30S subunits that are part of 70S ribosomes or polysomes). Required for efficient processing of 16S rRNA. May interact with the 5'-terminal helix region of 16S rRNA. The protein is Ribosome-binding factor A of Leptospira interrogans serogroup Icterohaemorrhagiae serovar copenhageni (strain Fiocruz L1-130).